We begin with the raw amino-acid sequence, 365 residues long: 2-aminoethylphosphonate--pyruvate transaminase (365 aa).

An N6-(pyridoxal phosphate)lysine modification is found at Lys194.

The protein belongs to the class-V pyridoxal-phosphate-dependent aminotransferase family. PhnW subfamily. Homodimer. Requires pyridoxal 5'-phosphate as cofactor.

The catalysed reaction is (2-aminoethyl)phosphonate + pyruvate = phosphonoacetaldehyde + L-alanine. In terms of biological role, involved in phosphonate degradation. The protein is 2-aminoethylphosphonate--pyruvate transaminase of Bacillus cereus (strain ZK / E33L).